Here is a 777-residue protein sequence, read N- to C-terminus: Santalene and bergamotene synthase, chloroplastic (777 aa).

The N-terminal 36 residues, 1-36, are a transit peptide targeting the chloroplast; the sequence is MIVGYRSTIITLSHPKLGNGKTISSNAIFQRSCRVR. Mg(2+) contacts are provided by D530 and D534. The DDXXD motif motif lies at 530-534; it reads DDQFD.

Belongs to the terpene synthase family. Tpse subfamily. It depends on Mg(2+) as a cofactor. Requires Mn(2+) as cofactor.

The protein resides in the plastid. The protein localises to the chloroplast. The catalysed reaction is (2Z,6Z)-farnesyl diphosphate = (+)-alpha-santalene + diphosphate. It catalyses the reaction (2Z,6Z)-farnesyl diphosphate = (+)-endo-beta-bergamotene + diphosphate. The enzyme catalyses (2Z,6Z)-farnesyl diphosphate = (1S,5S,6S)-alpha-bergamotene + diphosphate. Its function is as follows. (2Z,6Z)-farnesyl diphosphate cyclizing enzyme. Produces (+)-alpha-santalene, (+)-endo-beta-bergamotene, (-)-endo-alpha-bergamotene, and at lower amounts, (-)exo-alpha-bergamotene and (+)-epi-beta-santalene. Not able to use geranyl diphosphate, E,E-farnesyl diphosphate or E,E,E-geranylgeranyl diphosphate as substrates, but able to use Neryl diphosphate to make the monoterpene terpineol. This Solanum habrochaites (Wild tomato) protein is Santalene and bergamotene synthase, chloroplastic (SBS).